Here is a 441-residue protein sequence, read N- to C-terminus: C-terminal-binding protein 1 (441 aa).

Residues 1–70 form an interaction with GLIS2 1 region; sequence MGSSHLLNKG…EIHEKVLNEA (70 aa). NAD(+) contacts are provided by residues S100, 180–185, D204, 237–243, 264–266, and D290; these read IGLGRV, CGLNEHN, and TAR. The active site involves R266. The tract at residues 288–360 is interaction with GLIS2 2; it reads ALDVHESEPF…VNKDHLTAAT (73 aa). E295 is a catalytic residue. Residue S300 is modified to Phosphoserine. H315 functions as the Proton donor in the catalytic mechanism. 315–318 serves as a coordination point for NAD(+); sequence HAAW. The interval 409 to 441 is disordered; it reads SHGLPPVAHPPHAPSPGQTVKPEADRDHTSDQL. Phosphoserine is present on S423. K429 is covalently cross-linked (Glycyl lysine isopeptide (Lys-Gly) (interchain with G-Cter in SUMO)). The segment covering 430 to 441 has biased composition (basic and acidic residues); that stretch reads PEADRDHTSDQL.

The protein belongs to the D-isomer specific 2-hydroxyacid dehydrogenase family. As to quaternary structure, homo- or heterodimer. Heterodimer with CTBP2. Interacts with ELK3 (via its PXDLS motif). Interacts with RBBP8 (via its PXDLS motif). Interacts with PNN, MECOM and ZFHX1B. Interacts with ZNF366 (via PXDLS motif). Interaction with SATB1 (non-acetylated form); the interaction stabilizes its attachment to DNA and promotes transcription repression. Interacts with PRDM16; the interaction represses white adipose tissue (WAT)-specific genes expression. Interacts with GLIS2, HIPK2, FOXP1, FOXP2, HDAC4, HDAC5, HDAC9, NRIP1, WIZ and ZNF217. Interacts with BCL6; the interaction is required for BCL6 transcriptional autoinhibition and inhibition of some BCL6 target genes. Interacts with IKZF4. Interacts with MCRIP1 (unphosphorylated form, via the PXDLS motif); competitively inhibiting CTBP-ZEB1 interaction. Interacts with Bassoon/BSN; this interaction targets and anchors CTBP1 to presynapses. Interacts with SIMC1. The cofactor is NAD(+). In terms of processing, ADP-ribosylated; when cells are exposed to brefeldin A. Post-translationally, the level of phosphorylation appears to be regulated during the cell cycle. Phosphorylation by HIPK2 on Ser-423 induces proteasomal degradation. Sumoylation on Lys-429 is promoted by the E3 SUMO-protein ligase CBX4. Expressed in a wide range of adult tissues.

It is found in the cytoplasm. The protein localises to the nucleus. In terms of biological role, corepressor targeting diverse transcription regulators such as GLIS2 or BCL6. Has dehydrogenase activity. Involved in controlling the equilibrium between tubular and stacked structures in the Golgi complex. Functions in brown adipose tissue (BAT) differentiation. In Mus musculus (Mouse), this protein is C-terminal-binding protein 1 (Ctbp1).